Reading from the N-terminus, the 578-residue chain is Putative fatty-acid--CoA ligase fadD21 (578 aa).

This sequence belongs to the ATP-dependent AMP-binding enzyme family.

The polypeptide is Putative fatty-acid--CoA ligase fadD21 (fadD21) (Mycobacterium bovis (strain ATCC BAA-935 / AF2122/97)).